Reading from the N-terminus, the 30-residue chain is Cytochrome c3, 50 kDa (30 aa).

As to quaternary structure, monomer. Post-translationally, binds 4 heme groups per subunit.

The protein resides in the periplasm. Participates in sulfate respiration coupled with phosphorylation by transferring electrons from the enzyme dehydrogenase to ferredoxin. This chain is Cytochrome c3, 50 kDa, found in Desulfuromonas acetoxidans (Chloropseudomonas ethylica).